Reading from the N-terminus, the 282-residue chain is MEGKAYALASGTIINAIATGKGSAFGLDLKVYAKVKLIDDGKNKIEGKVLDNPNIKPNLIVRCVKNTLDYFGLNYSAYVETKTEIPIKSGLSSSSATSNAVVLATFDALGEKIDDELILNLGIKSSFDEKLTVTGAYDDATASYYGGITITDNIERKILKRDKMRDDLNVLILIPNLEKNVDVNRMKLIKDYVEIAFNEAINGNYFKALFLNGILYASALNFPTNIAIDALDAGAITAGLSGTGPSYIAMVEDENVEKVKEKLNRYGKVILTKPNNDGASIY.

86–96 (PIKSGLSSSSA) contributes to the ATP binding site.

The protein belongs to the GHMP kinase family. Archaeal shikimate kinase subfamily.

It localises to the cytoplasm. The enzyme catalyses shikimate + ATP = 3-phosphoshikimate + ADP + H(+). Its pathway is metabolic intermediate biosynthesis; chorismate biosynthesis; chorismate from D-erythrose 4-phosphate and phosphoenolpyruvate: step 5/7. The polypeptide is Shikimate kinase (aroK) (Methanocaldococcus jannaschii (strain ATCC 43067 / DSM 2661 / JAL-1 / JCM 10045 / NBRC 100440) (Methanococcus jannaschii)).